A 511-amino-acid chain; its full sequence is GMP synthase [glutamine-hydrolyzing] (511 aa).

The Glutamine amidotransferase type-1 domain maps to 5–195; that stretch reads AILVLDFGSQ…VFKICQAQIN (191 aa). The Nucleophile role is filled by Cys-82. Catalysis depends on residues His-169 and Glu-171. The region spanning 196-386 is the GMPS ATP-PPase domain; it reads WSLEGNLETI…LGIKKESLYR (191 aa). 223 to 229 is an ATP binding site; that stretch reads SGGTDSL.

Homodimer.

The catalysed reaction is XMP + L-glutamine + ATP + H2O = GMP + L-glutamate + AMP + diphosphate + 2 H(+). It participates in purine metabolism; GMP biosynthesis; GMP from XMP (L-Gln route): step 1/1. In terms of biological role, catalyzes the synthesis of GMP from XMP. This chain is GMP synthase [glutamine-hydrolyzing] (guaA), found in Borreliella burgdorferi (strain ATCC 35210 / DSM 4680 / CIP 102532 / B31) (Borrelia burgdorferi).